A 258-amino-acid chain; its full sequence is UPF0246 protein Jann_0444 (258 aa).

This sequence belongs to the UPF0246 family.

The protein is UPF0246 protein Jann_0444 of Jannaschia sp. (strain CCS1).